The following is a 68-amino-acid chain: Protein DsrB (68 aa).

This sequence belongs to the DsrB family.

This Sodalis glossinidius (strain morsitans) protein is Protein DsrB.